We begin with the raw amino-acid sequence, 169 residues long: E1B protein, small T-antigen (169 aa).

Belongs to the adenoviridae E1B 19 kDa protein family.

This chain is E1B protein, small T-antigen, found in Canis lupus familiaris (Dog).